A 103-amino-acid chain; its full sequence is ESAT-6-like protein EsxF (103 aa).

Belongs to the WXG100 family. CFP-10 subfamily.

The protein localises to the secreted. This Mycobacterium tuberculosis (strain CDC 1551 / Oshkosh) protein is ESAT-6-like protein EsxF.